Consider the following 1137-residue polypeptide: Isoleucine--tRNA ligase (1137 aa).

A 'HIGH' region motif is present at residues 50–60; sequence PSANGMPGIHH. The 'KMSKS' region signature appears at 688 to 692; that stretch reads KMSKR. Residue Lys691 coordinates ATP.

Belongs to the class-I aminoacyl-tRNA synthetase family. IleS type 2 subfamily. As to quaternary structure, monomer. Requires Zn(2+) as cofactor.

The protein resides in the cytoplasm. The enzyme catalyses tRNA(Ile) + L-isoleucine + ATP = L-isoleucyl-tRNA(Ile) + AMP + diphosphate. In terms of biological role, catalyzes the attachment of isoleucine to tRNA(Ile). As IleRS can inadvertently accommodate and process structurally similar amino acids such as valine, to avoid such errors it has two additional distinct tRNA(Ile)-dependent editing activities. One activity is designated as 'pretransfer' editing and involves the hydrolysis of activated Val-AMP. The other activity is designated 'posttransfer' editing and involves deacylation of mischarged Val-tRNA(Ile). This is Isoleucine--tRNA ligase from Porphyromonas gingivalis (strain ATCC BAA-308 / W83).